A 209-amino-acid chain; its full sequence is Mitochondrial import inner membrane translocase subunit Tim23 (209 aa).

Helical transmembrane passes span 73–93, 125–145, and 180–200; these read FELA…FGAV, ALWA…GVII, and GGLA…WEHI.

The protein belongs to the Tim17/Tim22/Tim23 family. In terms of assembly, component of the TIM23 complex at least composed of timm23, timm17 and timm50. The complex interacts with the timm44 component of the PAM complex.

It is found in the mitochondrion inner membrane. In terms of biological role, essential component of the TIM23 complex, a complex that mediates the translocation of transit peptide-containing proteins across the mitochondrial inner membrane. This is Mitochondrial import inner membrane translocase subunit Tim23 (timm23) from Xenopus tropicalis (Western clawed frog).